We begin with the raw amino-acid sequence, 339 residues long: DNA-directed RNA polymerase subunit alpha (339 aa).

The alpha N-terminal domain (alpha-NTD) stretch occupies residues 1-233 (MVREEVAGST…DLFLPFLHAE (233 aa)). Residues 264–339 (KKGIPLNSIF…IDLLKNKLSF (76 aa)) form an alpha C-terminal domain (alpha-CTD) region.

Belongs to the RNA polymerase alpha chain family. As to quaternary structure, in plastids the minimal PEP RNA polymerase catalytic core is composed of four subunits: alpha, beta, beta', and beta''. When a (nuclear-encoded) sigma factor is associated with the core the holoenzyme is formed, which can initiate transcription.

It localises to the plastid. The protein resides in the chloroplast. It catalyses the reaction RNA(n) + a ribonucleoside 5'-triphosphate = RNA(n+1) + diphosphate. Its function is as follows. DNA-dependent RNA polymerase catalyzes the transcription of DNA into RNA using the four ribonucleoside triphosphates as substrates. In Aegilops tauschii (Tausch's goatgrass), this protein is DNA-directed RNA polymerase subunit alpha.